Here is a 1088-residue protein sequence, read N- to C-terminus: Protein argonaute 18 (1088 aa).

Residues 1–220 (MASRGGGQHQ…QPPPDLPQAP (220 aa)) are disordered. Gly residues-rich tracts occupy residues 20–30 (GGYGRGGGGGR), 51–86 (YPGG…GQGR), 95–127 (GRGY…GGYH), 135–148 (GRGG…GGGY), 161–182 (ARGG…YGRG), and 191–206 (GRGG…GGGS). A compositionally biased stretch (pro residues) spans 211–220 (QPPPDLPQAP). Residues 477-574 (TVGYFLNNYG…LPMELCNIVP (98 aa)) form the PAZ domain. Positions 747 to 1056 (LLLVVMTDDK…LAFRARFYLT (310 aa)) constitute a Piwi domain.

The protein belongs to the argonaute family. Ago subfamily.

Functionally, probably involved in the RNA silencing pathway. May bind to short RNAs such as microRNAs (miRNAs) or short interfering RNAs (siRNAs), and represses the translation of mRNAs which are complementary to them. This chain is Protein argonaute 18 (AGO18), found in Oryza sativa subsp. japonica (Rice).